Here is an 88-residue protein sequence, read N- to C-terminus: ATP synthase F(0) complex subunit f, mitochondrial (88 aa).

The residue at position 2 (Ala-2) is an N-acetylalanine. A Phosphoserine modification is found at Ser-3. Lys-16 carries the N6-acetyllysine modification. A helical transmembrane segment spans residues 62–79; that stretch reads MVLAAYVFLNYCRSYKEL.

Component of the ATP synthase complex composed at least of ATP5F1A/subunit alpha, ATP5F1B/subunit beta, ATP5MC1/subunit c (homooctomer), MT-ATP6/subunit a, MT-ATP8/subunit 8, ATP5ME/subunit e, ATP5MF/subunit f, ATP5MG/subunit g, ATP5MK/subunit k, ATP5MJ/subunit j, ATP5F1C/subunit gamma, ATP5F1D/subunit delta, ATP5F1E/subunit epsilon, ATP5PF/subunit F6, ATP5PB/subunit b, ATP5PD/subunit d, ATP5PO/subunit OSCP. ATP synthase complex consists of a soluble F(1) head domain (subunits alpha(3) and beta(3)) - the catalytic core - and a membrane F(0) domain - the membrane proton channel (subunits c, a, 8, e, f, g, k and j). These two domains are linked by a central stalk (subunits gamma, delta, and epsilon) rotating inside the F1 region and a stationary peripheral stalk (subunits F6, b, d, and OSCP).

Its subcellular location is the mitochondrion. It localises to the mitochondrion inner membrane. Its function is as follows. Subunit f, of the mitochondrial membrane ATP synthase complex (F(1)F(0) ATP synthase or Complex V) that produces ATP from ADP in the presence of a proton gradient across the membrane which is generated by electron transport complexes of the respiratory chain. ATP synthase complex consist of a soluble F(1) head domain - the catalytic core - and a membrane F(1) domain - the membrane proton channel. These two domains are linked by a central stalk rotating inside the F(1) region and a stationary peripheral stalk. During catalysis, ATP synthesis in the catalytic domain of F(1) is coupled via a rotary mechanism of the central stalk subunits to proton translocation. In vivo, can only synthesize ATP although its ATP hydrolase activity can be activated artificially in vitro. Part of the complex F(0) domain. This chain is ATP synthase F(0) complex subunit f, mitochondrial, found in Bos taurus (Bovine).